The primary structure comprises 165 residues: Crossover junction endodeoxyribonuclease RuvC (165 aa).

Residues Asp-7, Glu-67, and Asp-140 contribute to the active site. 3 residues coordinate Mg(2+): Asp-7, Glu-67, and Asp-140.

The protein belongs to the RuvC family. Homodimer which binds Holliday junction (HJ) DNA. The HJ becomes 2-fold symmetrical on binding to RuvC with unstacked arms; it has a different conformation from HJ DNA in complex with RuvA. In the full resolvosome a probable DNA-RuvA(4)-RuvB(12)-RuvC(2) complex forms which resolves the HJ. Mg(2+) is required as a cofactor.

The protein localises to the cytoplasm. The catalysed reaction is Endonucleolytic cleavage at a junction such as a reciprocal single-stranded crossover between two homologous DNA duplexes (Holliday junction).. In terms of biological role, the RuvA-RuvB-RuvC complex processes Holliday junction (HJ) DNA during genetic recombination and DNA repair. Endonuclease that resolves HJ intermediates. Cleaves cruciform DNA by making single-stranded nicks across the HJ at symmetrical positions within the homologous arms, yielding a 5'-phosphate and a 3'-hydroxyl group; requires a central core of homology in the junction. The consensus cleavage sequence is 5'-(A/T)TT(C/G)-3'. Cleavage occurs on the 3'-side of the TT dinucleotide at the point of strand exchange. HJ branch migration catalyzed by RuvA-RuvB allows RuvC to scan DNA until it finds its consensus sequence, where it cleaves and resolves the cruciform DNA. This is Crossover junction endodeoxyribonuclease RuvC from Thermotoga petrophila (strain ATCC BAA-488 / DSM 13995 / JCM 10881 / RKU-1).